The following is a 286-amino-acid chain: Prepilin leader peptidase/N-methyltransferase (286 aa).

The chain crosses the membrane as a helical span at residues Phe-10–Ile-30. Zn(2+)-binding residues include Cys-70, Cys-73, Cys-95, and Cys-98. 6 helical membrane-spanning segments follow: residues Ile-102 to Trp-122, Trp-126 to Ile-146, Met-157 to Leu-177, Val-181 to Leu-201, Ile-224 to Val-244, and Gly-250 to Asn-270.

It belongs to the peptidase A24 family. Zn(2+) serves as cofactor.

The protein resides in the cell inner membrane. It catalyses the reaction Typically cleaves a -Gly-|-Phe- bond to release an N-terminal, basic peptide of 5-8 residues from type IV prepilin, and then N-methylates the new N-terminal amino group, the methyl donor being S-adenosyl-L-methionine.. Plays an essential role in type IV pili and type II pseudopili formation by proteolytically removing the leader sequence from substrate proteins and subsequently monomethylating the alpha-amino group of the newly exposed N-terminal phenylalanine. This Neisseria gonorrhoeae protein is Prepilin leader peptidase/N-methyltransferase (pilD).